The following is a 410-amino-acid chain: Squalene synthase 1 (410 aa).

G2 carries the post-translational modification N-acetylglycine. 2 helical membrane-spanning segments follow: residues 283–303 (SIFR…ALCY) and 387–407 (QPNS…FAYL).

It belongs to the phytoene/squalene synthase family. Mg(2+) is required as a cofactor. Requires Mn(2+) as cofactor. In terms of tissue distribution, expressed in all tissues analyzed (seedlings, cotyledons, inflorescences, siliques, leaves, stems and roots). Highly expressed in roots and pollen.

It localises to the endoplasmic reticulum membrane. The catalysed reaction is 2 (2E,6E)-farnesyl diphosphate + NADPH + H(+) = squalene + 2 diphosphate + NADP(+). The enzyme catalyses 2 (2E,6E)-farnesyl diphosphate + NADH + H(+) = squalene + 2 diphosphate + NAD(+). Its pathway is terpene metabolism; lanosterol biosynthesis; lanosterol from farnesyl diphosphate: step 1/3. This is Squalene synthase 1 from Arabidopsis thaliana (Mouse-ear cress).